A 206-amino-acid polypeptide reads, in one-letter code: Large ribosomal subunit protein uL13z (206 aa).

This sequence belongs to the universal ribosomal protein uL13 family.

This Arabidopsis thaliana (Mouse-ear cress) protein is Large ribosomal subunit protein uL13z (RPL13AA).